A 107-amino-acid chain; its full sequence is Iron-binding protein IscA (107 aa).

Fe cation is bound by residues Cys-35, Cys-99, and Cys-101.

Belongs to the HesB/IscA family. In terms of assembly, homodimer; may form tetramers and higher multimers. Fe cation is required as a cofactor.

In terms of biological role, is able to transfer iron-sulfur clusters to apo-ferredoxin. Multiple cycles of [2Fe2S] cluster formation and transfer are observed, suggesting that IscA acts catalytically. Recruits intracellular free iron so as to provide iron for the assembly of transient iron-sulfur cluster in IscU in the presence of IscS, L-cysteine and the thioredoxin reductase system TrxA/TrxB. The sequence is that of Iron-binding protein IscA from Cronobacter sakazakii (strain ATCC BAA-894) (Enterobacter sakazakii).